The following is a 220-amino-acid chain: Uracil-DNA glycosylase (220 aa).

The active-site Proton acceptor is D65.

The protein belongs to the uracil-DNA glycosylase (UDG) superfamily. UNG family.

It is found in the cytoplasm. The catalysed reaction is Hydrolyzes single-stranded DNA or mismatched double-stranded DNA and polynucleotides, releasing free uracil.. Its function is as follows. Excises uracil residues from the DNA which can arise as a result of misincorporation of dUMP residues by DNA polymerase or due to deamination of cytosine. The sequence is that of Uracil-DNA glycosylase from Azobacteroides pseudotrichonymphae genomovar. CFP2.